The chain runs to 565 residues: NAD-dependent malic enzyme (565 aa).

The active-site Proton donor is the tyrosine 104. Arginine 157 is an NAD(+) binding site. Catalysis depends on lysine 175, which acts as the Proton acceptor. A divalent metal cation-binding residues include glutamate 246, aspartate 247, and aspartate 270. Residues aspartate 270 and asparagine 418 each coordinate NAD(+).

The protein belongs to the malic enzymes family. In terms of assembly, homotetramer. The cofactor is Mg(2+). Mn(2+) is required as a cofactor.

The enzyme catalyses (S)-malate + NAD(+) = pyruvate + CO2 + NADH. It carries out the reaction oxaloacetate + H(+) = pyruvate + CO2. This Proteus mirabilis (strain HI4320) protein is NAD-dependent malic enzyme.